We begin with the raw amino-acid sequence, 833 residues long: Interleukin enhancer-binding factor 3 homolog (833 aa).

Positions 11 to 379 (RIFVNDDRHV…PMKRPIEEES (369 aa)) constitute a DZF domain. Disordered stretches follow at residues 65–86 (VNALDTDGEGDKETEPSTGEQA) and 339–403 (DPLP…KAEP). T70 carries the phosphothreonine modification. Over residues 373-385 (RPIEEESTDEKNP) the composition is skewed to basic and acidic residues. DRBM domains are found at residues 402–471 (EPAQ…DMGL) and 527–593 (HGKN…KLFP). Disordered stretches follow at residues 597 to 651 (NSEV…FNQG), 702 to 762 (QSDS…GGGA), and 775 to 833 (AYPS…YQYR). Residues 629 to 639 (GRGRGRGRGRG) are compositionally biased toward basic residues. Residues 640-651 (RGFNNGGGFNQG) are compositionally biased toward gly residues. Residues 775–818 (AYPSQVTGGQEYNYEGYSNQSNYNSQGGANQNFGGNSAPYNSGQ) are compositionally biased toward polar residues.

It is found in the nucleus. The protein localises to the nucleolus. It localises to the cytoplasm. Its function is as follows. RNA-binding protein that plays an essential role in the biogenesis of circular RNAs (circRNAs) which are produced by back-splicing circularization of pre-mRNAs. Within the nucleus, promotes circRNAs processing by stabilizing the regulatory elements residing in the flanking introns of the circularized exons. Plays thereby a role in the back-splicing of a subset of circRNAs. As a consequence, participates in a wide range of transcriptional and post-transcriptional processes. Binds to poly-U elements and AU-rich elements (AREs) in the 3'-UTR of target mRNAs. Upon viral infection, ILF3 accumulates in the cytoplasm and participates in the innate antiviral response. Mechanistically, ILF3 becomes phosphorylated and activated by the double-stranded RNA-activated protein kinase/PKR which releases ILF3 from cellular mature circRNAs. In turn, unbound ILF3 molecules are able to interact with and thus inhibit viral mRNAs. The polypeptide is Interleukin enhancer-binding factor 3 homolog (ilf3) (Danio rerio (Zebrafish)).